Consider the following 445-residue polypeptide: Phosphoglucosamine mutase (445 aa).

Catalysis depends on S102, which acts as the Phosphoserine intermediate. Positions 102, 241, 243, and 245 each coordinate Mg(2+). S102 bears the Phosphoserine mark.

This sequence belongs to the phosphohexose mutase family. Requires Mg(2+) as cofactor. Activated by phosphorylation.

It catalyses the reaction alpha-D-glucosamine 1-phosphate = D-glucosamine 6-phosphate. Functionally, catalyzes the conversion of glucosamine-6-phosphate to glucosamine-1-phosphate. The protein is Phosphoglucosamine mutase of Hahella chejuensis (strain KCTC 2396).